Reading from the N-terminus, the 1571-residue chain is Guanine nucleotide-releasing factor 2 (1571 aa).

Disordered regions lie at residues 28-85 (LPPH…RDTN), 202-271 (INSG…KLAR), and 287-316 (MRTT…PTTE). Basic residues predominate over residues 55–73 (QLHHHHHQQHHHNHHRLWK). The span at 74–83 (TQRQSWSPRD) shows a compositional bias: polar residues. The span at 230-248 (TPGGSSRVGGAGAGGGGGV) shows a compositional bias: gly residues. The segment covering 287 to 297 (MRTTNNTLGRS) has biased composition (polar residues). The segment covering 298 to 309 (HSPHSPRTKHGT) has biased composition (basic residues). Phosphoserine is present on residues Ser-496 and Ser-523. 6 disordered regions span residues 513-580 (HNVN…QASP), 614-646 (RSRS…HQHL), 695-719 (GEGV…ESGF), 728-747 (STQT…SSNS), 776-868 (QRHI…SEVA), and 879-898 (LNHH…HSKH). Thr-524 bears the Phosphothreonine mark. Ser-526 carries the phosphoserine modification. Residues 532–550 (SPPPKPPLPNRASNPPPLP) are compositionally biased toward pro residues. The SH3-binding motif lies at 546–556 (PPPLPPKRRSQ). Residues 556–579 (QPSASAGTVGVGCSSSTSTSNQAS) show a composition bias toward low complexity. Ser-615 carries the phosphoserine modification. The span at 620-631 (ENSQCSFDSALN) shows a compositional bias: polar residues. Low complexity predominate over residues 697–707 (GVAAAASGDGE). Residues 708–718 (TNSNRHSNESG) are compositionally biased toward polar residues. Low complexity-rich tracts occupy residues 735-747 (SVQS…SSNS) and 780-824 (SSSS…DLAP). Positions 820–831 (ADLAPALPPKSI) match the SH3-binding motif. Over residues 851 to 866 (VQSSSGWASHRSSQSE) the composition is skewed to polar residues. 2 consecutive short sequence motifs (SH3-binding) follow at residues 924–935 (DQEPPPLPIKKK) and 986–997 (LEMPPALPPKNY). Positions 1013–1038 (PVIVTTPPPSPKPTLGENGSTGRPDS) are disordered. The N-terminal Ras-GEF domain occupies 1170 to 1292 (DGPEVKGGYI…LRNKFVEKVT (123 aa)). The Ras-GEF domain occupies 1339-1564 (KSLEIAEQMT…WQISEKIKPR (226 aa)).

In terms of tissue distribution, ubiquitous.

In terms of biological role, guanine nucleotide-releasing protein that binds to SH3 domain of Crk. Transduces signals from Crk to activate RAS. Also involved in MAPK activation. This Drosophila melanogaster (Fruit fly) protein is Guanine nucleotide-releasing factor 2 (C3G).